Here is a 246-residue protein sequence, read N- to C-terminus: DNA repair protein RecO (246 aa).

It belongs to the RecO family.

In terms of biological role, involved in DNA repair and RecF pathway recombination. The protein is DNA repair protein RecO of Cutibacterium acnes (strain DSM 16379 / KPA171202) (Propionibacterium acnes).